We begin with the raw amino-acid sequence, 169 residues long: 16S rRNA aminocarboxypropyltransferase (169 aa).

Residues threonine 15, valine 65, leucine 88, and threonine 107 each coordinate S-adenosyl-L-methionine.

Belongs to the TDD superfamily. TSR3 family.

It localises to the cytoplasm. It carries out the reaction an N(1)-methylpseudouridine in rRNA + S-adenosyl-L-methionine = N(1)-methyl-N(3)-[(3S)-3-amino-3-carboxypropyl]pseudouridine in rRNA + S-methyl-5'-thioadenosine + H(+). Functionally, aminocarboxypropyltransferase that catalyzes the aminocarboxypropyl transfer on pseudouridine corresponding to position 914 in M.jannaschii 16S rRNA. It constitutes the last step in biosynthesis of the hypermodified N1-methyl-N3-(3-amino-3-carboxypropyl) pseudouridine (m1acp3-Psi). The sequence is that of 16S rRNA aminocarboxypropyltransferase from Methanopyrus kandleri (strain AV19 / DSM 6324 / JCM 9639 / NBRC 100938).